We begin with the raw amino-acid sequence, 409 residues long: tRNA-specific 2-thiouridylase MnmA (409 aa).

Residues 20 to 27 and leucine 46 contribute to the ATP site; that span reads AMSGGVDS. Cysteine 114 serves as the catalytic Nucleophile. The cysteines at positions 114 and 210 are disulfide-linked. Glycine 138 contributes to the ATP binding site. Residues 160 to 162 are interaction with tRNA; sequence RDQ. Cysteine 210 serves as the catalytic Cysteine persulfide intermediate.

The protein belongs to the MnmA/TRMU family.

The protein localises to the cytoplasm. It carries out the reaction S-sulfanyl-L-cysteinyl-[protein] + uridine(34) in tRNA + AH2 + ATP = 2-thiouridine(34) in tRNA + L-cysteinyl-[protein] + A + AMP + diphosphate + H(+). Catalyzes the 2-thiolation of uridine at the wobble position (U34) of tRNA, leading to the formation of s(2)U34. This chain is tRNA-specific 2-thiouridylase MnmA, found in Bartonella henselae (strain ATCC 49882 / DSM 28221 / CCUG 30454 / Houston 1) (Rochalimaea henselae).